The primary structure comprises 494 residues: Sugar phosphate exchanger 3 (494 aa).

A helical membrane pass occupies residues 10–30 (GALLTSFSHHHLAVFLLTFFS). Asparagine 58 carries N-linked (GlcNAc...) asparagine glycosylation. The next 5 helical transmembrane spans lie at 81-101 (TLFL…GLFI), 113-133 (WVLS…GTLT), 146-166 (GLWI…VAVM), 177-197 (VVFG…AFLA), and 209-229 (FLVT…GLLV). Residues 240–261 (GAEESSEEDSQRPLIDGAENED) are disordered. The next 6 membrane-spanning stretches (helical) occupy residues 297–317 (LAYA…PFYL), 333–353 (IWYD…SDVL), 357–377 (APVL…YSRS), 386–406 (LLMT…SSAI), 428–448 (GIVD…VSLI), and 457–477 (VFYF…PLIV).

This sequence belongs to the major facilitator superfamily. Organophosphate:Pi antiporter (OPA) (TC 2.A.1.4) family. Interacts with ATRAID; the interaction is direct and both proteins are mutually dependent for their stability. Glycosylated.

The protein resides in the endoplasmic reticulum membrane. Its subcellular location is the lysosome membrane. Its function is as follows. Unlike the other SLC37 members, lacks glucose-6-phosphate antiporter activity. In osteoclasts, forms a transporter complex with ATRAID for nitrogen-containing-bisphophonates (N-BPs) required for releasing N-BP molecules that have trafficked to lysosomes through fluid-phase endocytosis into the cytosol. The chain is Sugar phosphate exchanger 3 (Slc37a3) from Mus musculus (Mouse).